Here is a 133-residue protein sequence, read N- to C-terminus: Ribosome-binding factor A (133 aa).

The protein belongs to the RbfA family. Monomer. Binds 30S ribosomal subunits, but not 50S ribosomal subunits or 70S ribosomes.

It is found in the cytoplasm. In terms of biological role, one of several proteins that assist in the late maturation steps of the functional core of the 30S ribosomal subunit. Associates with free 30S ribosomal subunits (but not with 30S subunits that are part of 70S ribosomes or polysomes). Required for efficient processing of 16S rRNA. May interact with the 5'-terminal helix region of 16S rRNA. This is Ribosome-binding factor A from Alteromonas mediterranea (strain DSM 17117 / CIP 110805 / LMG 28347 / Deep ecotype).